A 574-amino-acid chain; its full sequence is K(+)/H(+) antiporter NhaP2 (574 aa).

13 helical membrane-spanning segments follow: residues 6–26 (INSFFLIGALLAAVSVLLSPV), 34–54 (ILLIFLAVGILAGEDGPGGIL), 58–78 (YSTAYLVSNLALAIILLDGGM), 87–107 (VALWPALSLATFGVAITTSIT), 109–129 (VMAAWLFDLHWLQGLLVGAIV), 173–193 (IAILGNVDAELSASFMLISFI), 196–216 (FGLGIFLGLGGGWLLWKLVNL), 219–239 (LAEGLYSILVLSGGLMIYAAS), 242–262 (LGGSGILSIYLVGLFLGNKPT), 271–291 (VLDGMTWVSQIGMFLVLGLLL), 299–319 (IWLPGLALAFGMILFARPLAV), 335–355 (WFISWVGLRGAVPIILAVFPM), and 359–379 (LPGAQLYFNLAFFVVLVSLLV). The region spanning 405-486 (SGVEIYPSSE…LEALSNLFSQ (82 aa)) is the RCK C-terminal domain.

It belongs to the monovalent cation:proton antiporter 1 (CPA1) transporter (TC 2.A.36) family. NhaP2 subfamily.

It localises to the cell inner membrane. It carries out the reaction K(+)(in) + H(+)(out) = K(+)(out) + H(+)(in). Its function is as follows. K(+)/H(+) antiporter that extrudes potassium in exchange for external protons and maintains the internal concentration of potassium under toxic levels. The protein is K(+)/H(+) antiporter NhaP2 of Shewanella sp. (strain MR-7).